Reading from the N-terminus, the 363-residue chain is Chorismate synthase (363 aa).

Residues R48 and R54 each contribute to the NADP(+) site. Residues 125–127 (RSS), 237–238 (NA), G277, 292–296 (KPTSS), and R318 each bind FMN.

The protein belongs to the chorismate synthase family. In terms of assembly, homotetramer. It depends on FMNH2 as a cofactor.

The enzyme catalyses 5-O-(1-carboxyvinyl)-3-phosphoshikimate = chorismate + phosphate. It functions in the pathway metabolic intermediate biosynthesis; chorismate biosynthesis; chorismate from D-erythrose 4-phosphate and phosphoenolpyruvate: step 7/7. Its function is as follows. Catalyzes the anti-1,4-elimination of the C-3 phosphate and the C-6 proR hydrogen from 5-enolpyruvylshikimate-3-phosphate (EPSP) to yield chorismate, which is the branch point compound that serves as the starting substrate for the three terminal pathways of aromatic amino acid biosynthesis. This reaction introduces a second double bond into the aromatic ring system. The protein is Chorismate synthase of Pseudomonas fluorescens (strain Pf0-1).